A 306-amino-acid chain; its full sequence is Pantothenate kinase (306 aa).

91–98 (GSVAVGKS) contributes to the ATP binding site.

This sequence belongs to the prokaryotic pantothenate kinase family.

Its subcellular location is the cytoplasm. The catalysed reaction is (R)-pantothenate + ATP = (R)-4'-phosphopantothenate + ADP + H(+). Its pathway is cofactor biosynthesis; coenzyme A biosynthesis; CoA from (R)-pantothenate: step 1/5. This chain is Pantothenate kinase, found in Streptococcus pyogenes serotype M49 (strain NZ131).